The sequence spans 288 residues: T-cell-interacting, activating receptor on myeloid cells protein 1 (288 aa).

The N-terminal stretch at 1–16 (MISRLLSLLCLRLCVG) is a signal peptide. The Extracellular portion of the chain corresponds to 17 to 258 (QTDIPENGSP…EGYTVDNLIR (242 aa)). Ig-like C2-type domains are found at residues 27-113 (PKPS…HPSN) and 124-217 (PQPS…LEIS). 2 cysteine pairs are disulfide-bonded: C49–C97 and C146–C196. N-linked (GlcNAc...) asparagine glycosylation is found at N74 and N185. Residues 259–279 (VGVAAAILLIVGGFLVEAWHS) form a helical membrane-spanning segment. The Cytoplasmic segment spans residues 280–288 (ERLSPNKPW).

Interacts with Fc receptor gamma chain FCER1G. N-glycosylated. Expressed in lung, uterus, lymph nodes, spleen, thymus and bone marrow. Expressed in bone marrow CD11b(+)Gr-1(+) granulocyte precursors and mature neutrophils.

Its subcellular location is the cell membrane. May act as receptor. Negatively regulates TCR-mediated CD4(+) T cell proliferation and activation, possibly by binding an unknown ligand on the T cell surface. Enhances Toll-like receptor-mediated production of pro-inflammatory cytokines by macrophages and neutrophils. The polypeptide is T-cell-interacting, activating receptor on myeloid cells protein 1 (Tarm1) (Mus musculus (Mouse)).